A 567-amino-acid chain; its full sequence is Monodechloroaminopyrrolnitrin halogenase PrnC (567 aa).

It functions in the pathway antibiotic biosynthesis. In terms of biological role, involved in the biosynthesis of the antifungal antibiotic pyrrolnitrin. Catalyzes the chlorination of monodechloroaminopyrrolnitrin (MDA) at the 3 position to form aminopyrrolnitrin (APRN). The protein is Monodechloroaminopyrrolnitrin halogenase PrnC (prnC) of Pseudomonas fluorescens.